We begin with the raw amino-acid sequence, 188 residues long: Protein ORFV073 (188 aa).

Interacts with host IKBKG; this interaction inhibits host NF-kappa-B pathway activation.

Its subcellular location is the host nucleus. It is found in the host cytoplasm. The protein resides in the host perinuclear region. The protein localises to the virion. Plays a role in the inhibition of the host NF-kappa-B pathway early during infection. Prevents the host RELA subunit from reaching the nucleus and activate transcription. The sequence is that of Protein ORFV073 from Capra hircus (Goat).